The primary structure comprises 174 residues: Bifunctional protein PyrR 2 (174 aa).

Residues 39-40, 100-108, and Arg-133 each bind substrate; these read TR and DDVLFTGRT. The PRPP-binding signature appears at 96–108; sequence VILVDDVLFTGRT.

It belongs to the purine/pyrimidine phosphoribosyltransferase family. PyrR subfamily. As to quaternary structure, homodimer and homohexamer; in equilibrium.

It catalyses the reaction UMP + diphosphate = 5-phospho-alpha-D-ribose 1-diphosphate + uracil. Functionally, regulates transcriptional attenuation of the pyrimidine nucleotide (pyr) operon by binding in a uridine-dependent manner to specific sites on pyr mRNA. This disrupts an antiterminator hairpin in the RNA and favors formation of a downstream transcription terminator, leading to a reduced expression of downstream genes. In terms of biological role, also displays a weak uracil phosphoribosyltransferase activity which is not physiologically significant. The polypeptide is Bifunctional protein PyrR 2 (pyrR2) (Lactiplantibacillus plantarum (strain ATCC BAA-793 / NCIMB 8826 / WCFS1) (Lactobacillus plantarum)).